A 304-amino-acid polypeptide reads, in one-letter code: Acetyl-coenzyme A carboxylase carboxyl transferase subunit beta (304 aa).

The CoA carboxyltransferase N-terminal domain occupies 23–292 (VWTKCDSCGQ…PNPEAPREGV (270 aa)). Zn(2+) is bound by residues Cys27, Cys30, Cys46, and Cys49. The C4-type zinc finger occupies 27 to 49 (CDSCGQVLYRAELERNLEVCPKC). A disordered region spans residues 284–304 (NPEAPREGVVVPPVPDQEPEA). Residues 295–304 (PPVPDQEPEA) are compositionally biased toward pro residues.

It belongs to the AccD/PCCB family. As to quaternary structure, acetyl-CoA carboxylase is a heterohexamer composed of biotin carboxyl carrier protein (AccB), biotin carboxylase (AccC) and two subunits each of ACCase subunit alpha (AccA) and ACCase subunit beta (AccD). Zn(2+) serves as cofactor.

It is found in the cytoplasm. The catalysed reaction is N(6)-carboxybiotinyl-L-lysyl-[protein] + acetyl-CoA = N(6)-biotinyl-L-lysyl-[protein] + malonyl-CoA. It functions in the pathway lipid metabolism; malonyl-CoA biosynthesis; malonyl-CoA from acetyl-CoA: step 1/1. Component of the acetyl coenzyme A carboxylase (ACC) complex. Biotin carboxylase (BC) catalyzes the carboxylation of biotin on its carrier protein (BCCP) and then the CO(2) group is transferred by the transcarboxylase to acetyl-CoA to form malonyl-CoA. This chain is Acetyl-coenzyme A carboxylase carboxyl transferase subunit beta, found in Escherichia coli O6:K15:H31 (strain 536 / UPEC).